Reading from the N-terminus, the 246-residue chain is AA9 family lytic polysaccharide monooxygenase D (246 aa).

An N-terminal signal peptide occupies residues 1–19 (MHLLSLLFPVIALIPTVLS). Histidine 20 serves as a coordination point for Cu(2+). Cysteine 78 and cysteine 196 form a disulfide bridge. N-linked (GlcNAc...) asparagine glycosylation is found at asparagine 86, asparagine 141, and asparagine 156. Histidine 182 and glutamine 191 together coordinate O2. Cu(2+) is bound at residue tyrosine 193. Residue asparagine 235 is glycosylated (N-linked (GlcNAc...) asparagine).

Belongs to the polysaccharide monooxygenase AA9 family. Cu(2+) is required as a cofactor.

It is found in the secreted. The catalysed reaction is [(1-&gt;4)-beta-D-glucosyl]n+m + reduced acceptor + O2 = 4-dehydro-beta-D-glucosyl-[(1-&gt;4)-beta-D-glucosyl]n-1 + [(1-&gt;4)-beta-D-glucosyl]m + acceptor + H2O.. In terms of biological role, lytic polysaccharide monooxygenase (LPMO) that depolymerizes crystalline and amorphous polysaccharides via the oxidation of scissile alpha- or beta-(1-4)-glycosidic bonds, yielding C1 and C4 oxidation products. Catalysis by LPMOs requires the reduction of the active-site copper from Cu(II) to Cu(I) by a reducing agent and H(2)O(2) or O(2) as a cosubstrate. The polypeptide is AA9 family lytic polysaccharide monooxygenase D (Botryotinia fuckeliana (strain B05.10) (Noble rot fungus)).